We begin with the raw amino-acid sequence, 523 residues long: Cytokinin dehydrogenase 3 (523 aa).

The first 31 residues, 1–31, serve as a signal peptide directing secretion; the sequence is MASYNLRSQVRLIAITIVIIITLSTPITTNT. The region spanning 66 to 243 is the FAD-binding PCMH-type domain; that stretch reads TKIFPSAVLI…TRARIKLEVA (178 aa). FAD contacts are provided by alanine 100, glycine 102, and glycine 104. Pros-8alpha-FAD histidine is present on histidine 105. FAD is bound by residues serine 106 and glutamine 110. The N-linked (GlcNAc...) asparagine glycan is linked to asparagine 153. Residues aspartate 167, threonine 172, serine 178, isoleucine 182, and isoleucine 233 each coordinate FAD. Asparagine 408 is a glycosylation site (N-linked (GlcNAc...) asparagine). Positions 476, 511, and 514 each coordinate FAD.

This sequence belongs to the oxygen-dependent FAD-linked oxidoreductase family. FAD is required as a cofactor. Very weak expression in the young shoot tissues around two weeks after germination. Present in the center of the floral meristem and the boundary between long stamen primordia and gynoecial primordia.

The protein resides in the endoplasmic reticulum. The protein localises to the vacuole. The enzyme catalyses N(6)-dimethylallyladenine + A + H2O = 3-methyl-2-butenal + adenine + AH2. Its function is as follows. Catalyzes the oxidation of cytokinins, a family of N(6)-substituted adenine derivatives that are plant hormones, where the substituent is an isopentenyl group. Catalyzes in vitro the oxidation of various types of cytokinin nucleotides that are known as direct products of cytokinin biosynthesis. In association with CKX5 regulates the activity of the reproductive meristems, flower organ size and ovule formation. The sequence is that of Cytokinin dehydrogenase 3 (CKX3) from Arabidopsis thaliana (Mouse-ear cress).